The primary structure comprises 566 residues: Proline--tRNA ligase (566 aa).

This sequence belongs to the class-II aminoacyl-tRNA synthetase family. ProS type 1 subfamily. Homodimer.

The protein localises to the cytoplasm. The catalysed reaction is tRNA(Pro) + L-proline + ATP = L-prolyl-tRNA(Pro) + AMP + diphosphate. Functionally, catalyzes the attachment of proline to tRNA(Pro) in a two-step reaction: proline is first activated by ATP to form Pro-AMP and then transferred to the acceptor end of tRNA(Pro). As ProRS can inadvertently accommodate and process non-cognate amino acids such as alanine and cysteine, to avoid such errors it has two additional distinct editing activities against alanine. One activity is designated as 'pretransfer' editing and involves the tRNA(Pro)-independent hydrolysis of activated Ala-AMP. The other activity is designated 'posttransfer' editing and involves deacylation of mischarged Ala-tRNA(Pro). The misacylated Cys-tRNA(Pro) is not edited by ProRS. In Staphylococcus haemolyticus (strain JCSC1435), this protein is Proline--tRNA ligase.